Reading from the N-terminus, the 493-residue chain is Glutamate--tRNA ligase (493 aa).

Residues 10–20 (PSPTGDPHVGT) carry the 'HIGH' region motif. Residues Cys-107, Cys-109, Cys-134, and His-136 each coordinate Zn(2+). Positions 251 to 255 (KLSKR) match the 'KMSKS' region motif. Lys-254 is an ATP binding site.

Belongs to the class-I aminoacyl-tRNA synthetase family. Glutamate--tRNA ligase type 1 subfamily. Monomer. Zn(2+) serves as cofactor.

Its subcellular location is the cytoplasm. It catalyses the reaction tRNA(Glu) + L-glutamate + ATP = L-glutamyl-tRNA(Glu) + AMP + diphosphate. Functionally, catalyzes the attachment of glutamate to tRNA(Glu) in a two-step reaction: glutamate is first activated by ATP to form Glu-AMP and then transferred to the acceptor end of tRNA(Glu). In Ectopseudomonas mendocina (strain ymp) (Pseudomonas mendocina), this protein is Glutamate--tRNA ligase.